The chain runs to 395 residues: Acetate kinase 1 (395 aa).

A Mg(2+)-binding site is contributed by N8. Residue K15 coordinates ATP. Substrate is bound at residue R89. D146 functions as the Proton donor/acceptor in the catalytic mechanism. ATP-binding positions include 206-210 (HIGNG), 283-285 (DMR), and 330-334 (GIGEN). Residue E382 coordinates Mg(2+).

Belongs to the acetokinase family. In terms of assembly, homodimer. Mg(2+) is required as a cofactor. It depends on Mn(2+) as a cofactor.

It is found in the cytoplasm. It catalyses the reaction acetate + ATP = acetyl phosphate + ADP. The protein operates within metabolic intermediate biosynthesis; acetyl-CoA biosynthesis; acetyl-CoA from acetate: step 1/2. Catalyzes the formation of acetyl phosphate from acetate and ATP. Can also catalyze the reverse reaction. In Lactococcus lactis subsp. lactis (strain IL1403) (Streptococcus lactis), this protein is Acetate kinase 1.